The following is a 236-amino-acid chain: Probable transmembrane ascorbate ferrireductase 4 (236 aa).

Residues 14–210 (FARLSGLVVA…LGCIVITAAI (197 aa)) enclose the Cytochrome b561 domain. The next 3 membrane-spanning stretches (helical) occupy residues 17-37 (LSGL…PNLG), 42-62 (TLHP…AILI), and 76-96 (VHLW…WTKF). 3 residues coordinate heme b: His-44, His-77, and His-110. Helical transmembrane passes span 112–132 (WMGL…FMSF), 144–164 (TFLP…IATA), and 191–211 (VNGL…AAIL). His-149 is a heme b binding site.

Homodimer. Requires heme b as cofactor.

It is found in the membrane. It catalyses the reaction Fe(3+)(out) + L-ascorbate(in) = monodehydro-L-ascorbate radical(in) + Fe(2+)(out) + H(+). Two-heme-containing cytochrome. May catalyze ascorbate-dependent trans-membrane ferric-chelate reduction. In Arabidopsis thaliana (Mouse-ear cress), this protein is Probable transmembrane ascorbate ferrireductase 4 (CYB561D).